Consider the following 209-residue polypeptide: MTPPASPGVLYIVSAPSGAGKTSLVKALLKSDPAIRLSVSHTTRAPRPGESDGRDYHFVARDTFEKMLADGEFLEHAEVYGNFYGTSRGRIGQELDAGRDLLLEIDWQGAEQVKRHFPQSTSIFILPPTFSALRTRLTGRGQDSPEIIERRLAAAAHDVAHAEAFDYIIVNDDFDHALQDLVAITRSIRLEAQRQLKRHAALFGEFRRI.

Residues 8–186 (GVLYIVSAPS…ALQDLVAITR (179 aa)) enclose the Guanylate kinase-like domain. 15-22 (APSGAGKT) is a binding site for ATP.

The protein belongs to the guanylate kinase family.

Its subcellular location is the cytoplasm. The catalysed reaction is GMP + ATP = GDP + ADP. In terms of biological role, essential for recycling GMP and indirectly, cGMP. The protein is Guanylate kinase of Thiobacillus denitrificans (strain ATCC 25259 / T1).